Here is a 378-residue protein sequence, read N- to C-terminus: MSHVDDGFRSLTLKRFPQTDDVNPLLAWEAADEYLLQQLDETEIRGPVLILNDTFGALSCALAEHSPYSIGDSYLSELGTRENLRHNGIAESSVTFLDSTADYPQAPGVVLIKVPKTLALLEQQLRALRKVVTAQTRIIAGAKARDIHTSTLELFEKVLGPTTTTLAWKKARLINCTFSHPQLPDAPQTLSWKLEDTGWTIHNHANVFSRTGLDIGARFFMQHLPENLDGEIVDLGCGNGVIGLSLLAKNPQAKVVFVDESPMAVDSSRLNVETNLPEAFERCEFMINNALSGVEPFRFNAVFCNPPFHQKHALTDNIAWEMFHHARRCLKINGELYIVANRHLDYFHKLKKIFGNCATIATNNKFVILKAVKQGRRR.

This sequence belongs to the methyltransferase superfamily. RlmG family.

The protein resides in the cytoplasm. The catalysed reaction is guanosine(1835) in 23S rRNA + S-adenosyl-L-methionine = N(2)-methylguanosine(1835) in 23S rRNA + S-adenosyl-L-homocysteine + H(+). Its function is as follows. Specifically methylates the guanine in position 1835 (m2G1835) of 23S rRNA. In Salmonella newport (strain SL254), this protein is Ribosomal RNA large subunit methyltransferase G.